A 332-amino-acid chain; its full sequence is 2,3-diketo-L-gulonate reductase (332 aa).

His-44 functions as the Proton donor in the catalytic mechanism. NAD(+) is bound by residues Ile-168–Ser-174, Trp-224–Lys-225, and Gly-304–Glu-306.

It belongs to the LDH2/MDH2 oxidoreductase family. DlgD subfamily. In terms of assembly, homodimer.

It is found in the cytoplasm. The enzyme catalyses 3-dehydro-L-gulonate + NAD(+) = 2,3-dioxo-L-gulonate + NADH + H(+). It carries out the reaction 3-dehydro-L-gulonate + NADP(+) = 2,3-dioxo-L-gulonate + NADPH + H(+). Catalyzes the reduction of 2,3-diketo-L-gulonate in the presence of NADH, to form 3-keto-L-gulonate. This Escherichia coli (strain SMS-3-5 / SECEC) protein is 2,3-diketo-L-gulonate reductase.